Reading from the N-terminus, the 114-residue chain is T cell receptor beta variable 6-4 (114 aa).

The first 21 residues, 1-21 (MSIRLLCCVAFSLLWAGPVTA), serve as a signal peptide directing secretion. The Ig-like domain occupies 22 to 114 (GITQAPTSQI…TSVYFCASSD (93 aa)). The cysteines at positions 42 and 110 are disulfide-linked.

In terms of assembly, alpha-beta TR is a heterodimer composed of an alpha and beta chain; disulfide-linked. The alpha-beta TR is associated with the transmembrane signaling CD3 coreceptor proteins to form the TR-CD3 (TcR or TCR). The assembly of alpha-beta TR heterodimers with CD3 occurs in the endoplasmic reticulum where a single alpha-beta TR heterodimer associates with one CD3D-CD3E heterodimer, one CD3G-CD3E heterodimer and one CD247 homodimer forming a stable octameric structure. CD3D-CD3E and CD3G-CD3E heterodimers preferentially associate with TR alpha and TR beta chains, respectively. The association of the CD247 homodimer is the last step of TcR assembly in the endoplasmic reticulum and is required for transport to the cell surface.

The protein resides in the cell membrane. Functionally, v region of the variable domain of T cell receptor (TR) beta chain that participates in the antigen recognition. Alpha-beta T cell receptors are antigen specific receptors which are essential to the immune response and are present on the cell surface of T lymphocytes. Recognize peptide-major histocompatibility (MH) (pMH) complexes that are displayed by antigen presenting cells (APC), a prerequisite for efficient T cell adaptive immunity against pathogens. Binding of alpha-beta TR to pMH complex initiates TR-CD3 clustering on the cell surface and intracellular activation of LCK that phosphorylates the ITAM motifs of CD3G, CD3D, CD3E and CD247 enabling the recruitment of ZAP70. In turn ZAP70 phosphorylates LAT, which recruits numerous signaling molecules to form the LAT signalosome. The LAT signalosome propagates signal branching to three major signaling pathways, the calcium, the mitogen-activated protein kinase (MAPK) kinase and the nuclear factor NF-kappa-B (NF-kB) pathways, leading to the mobilization of transcription factors that are critical for gene expression and essential for T cell growth and differentiation. The T cell repertoire is generated in the thymus, by V-(D)-J rearrangement. This repertoire is then shaped by intrathymic selection events to generate a peripheral T cell pool of self-MH restricted, non-autoaggressive T cells. Post-thymic interaction of alpha-beta TR with the pMH complexes shapes TR structural and functional avidity. This chain is T cell receptor beta variable 6-4, found in Homo sapiens (Human).